Reading from the N-terminus, the 519-residue chain is Membrane protein insertase YidC (519 aa).

Helical transmembrane passes span 6–26 (ILFV…FAQP), 298–318 (VDFG…VFFY), 324–344 (YGWA…PLTL), 390–410 (LGGC…FTML), 434–454 (FMQF…IGMF), and 471–491 (IMYI…SGLV).

Belongs to the OXA1/ALB3/YidC family. Type 1 subfamily. In terms of assembly, interacts with the Sec translocase complex via SecD. Specifically interacts with transmembrane segments of nascent integral membrane proteins during membrane integration.

The protein localises to the cell inner membrane. Functionally, required for the insertion and/or proper folding and/or complex formation of integral membrane proteins into the membrane. Involved in integration of membrane proteins that insert both dependently and independently of the Sec translocase complex, as well as at least some lipoproteins. Aids folding of multispanning membrane proteins. The chain is Membrane protein insertase YidC from Endomicrobium trichonymphae.